Consider the following 225-residue polypeptide: pH-response regulator palI/RIM9 homolog 2 (225 aa).

The Cytoplasmic segment spans residues 1–4 (MLVK). The chain crosses the membrane as a helical span at residues 5–25 (IVLVVLLTLALVFECFSTISV). The Extracellular portion of the chain corresponds to 26-87 (PITIGLYISE…PNHAKYALSN (62 aa)). A helical membrane pass occupies residues 88-108 (LLLVHVLAFVCVTILWVFGML). Residues 109–120 (TCFRCIKTSRRM) are Cytoplasmic-facing. The chain crosses the membrane as a helical span at residues 121–141 (LIIAVLWSMLTFMVTLLGFLI). The Extracellular segment spans residues 142-153 (DILIFSSHVTWC). A helical transmembrane segment spans residues 154-174 (TWLTLASAFFTVLSGTVLCVM). Residues 175–225 (RRNLTYDKFLESKPEKHGVYVPLCRLNDVEELEIPWCNTMNHQALTAPTPM) lie on the Cytoplasmic side of the membrane.

Belongs to the palI/RIM9 family.

It localises to the cell membrane. In terms of biological role, required for the proteolytic cleavage of the transcription factor RIM101 in response to alkaline ambient pH. The polypeptide is pH-response regulator palI/RIM9 homolog 2 (Kluyveromyces lactis (strain ATCC 8585 / CBS 2359 / DSM 70799 / NBRC 1267 / NRRL Y-1140 / WM37) (Yeast)).